Reading from the N-terminus, the 235-residue chain is Sperm annulus positionning complex subunit Chibby3 (235 aa).

Residues 1-41 are disordered; the sequence is MADSKMKWGQAWDSSLGTATTSSSSATGSPSPFQNIRVPDT. Residues 14-32 are compositionally biased toward low complexity; the sequence is SSLGTATTSSSSATGSPSP. A leucine-zipper; mediates homodimerization region spans residues 167 to 181; the sequence is LLEENNYLKLQQELL.

It belongs to the chibby family. As to quaternary structure, homodimer. Interacts with CIBAR1 (via BAR-like domain); both proteins form a ninefold symmetric structure at the flagellar base; are recruited to the annulus in a mutually dependent manner and regulate annulus positionning. In terms of tissue distribution, testis-specific.

The protein resides in the cell projection. It is found in the cilium. It localises to the flagellum. Plays a key role in the correct positioning of the annulus, a septin-based ring strucure in the sperm flagellum, serving both as a physical barrier and a membrane diffusion barrier that separates the midpiece (MP) from the principal piece (PP). This positioning is essential for proper sperm motility and function. Interacts with CIBAR1 to form a complex which localizes to the curved membrane region of the flagellar pocket. By doing so, may provide stability and rigidity to the periannular membrane to prevent membrane deformation. This function is crucial for halting annulus migration at the proximal end of the fibrous sheath-containing PP. The chain is Sperm annulus positionning complex subunit Chibby3 (Cby3) from Mus musculus (Mouse).